A 248-amino-acid chain; its full sequence is Ribonuclease 3 (248 aa).

The region spanning 15–142 (LKAFFKQYHV…MIAALYLDLG (128 aa)) is the RNase III domain. Glu-55 serves as a coordination point for Mg(2+). Asp-59 is a catalytic residue. Asp-128 and Glu-131 together coordinate Mg(2+). Glu-131 is a catalytic residue. The region spanning 169-240 (DYKTELQEFL…ARDALQKLAT (72 aa)) is the DRBM domain.

It belongs to the ribonuclease III family. In terms of assembly, homodimer. Mg(2+) serves as cofactor.

It localises to the cytoplasm. The enzyme catalyses Endonucleolytic cleavage to 5'-phosphomonoester.. Digests double-stranded RNA. Involved in the processing of primary rRNA transcript to yield the immediate precursors to the large and small rRNAs (23S and 16S). Processes some mRNAs, and tRNAs when they are encoded in the rRNA operon. Processes pre-crRNA and tracrRNA of type II CRISPR loci if present in the organism. The polypeptide is Ribonuclease 3 (Spiroplasma citri).